Reading from the N-terminus, the 1168-residue chain is MDDDDFDDIPDEDLMLAFTQATGNITSHHPSNSKQLASSAKPPAQAWPISDSARRIVTPTVSQGQATATGRAKTASKPTTSATTSRPSLAQSSQRKNLRQTTLWGGTLEEDAQPAPQAVSNRPFRADMPPEQPTHHEIDIEEMKTWVYPMNLGPIRDYQFSIVKNGLFNNTLVALPTGLGKTFIAATIMLNYIRWTKTAKAVFVAPTKPLASQQVQACLSIAGIPRSQATLLTGETPPVLREDEWATKRLFFMTPQTLMNDLSKGYADPKSIVLLVIDEAHRATGDYAYVKVVEFLRRFSKSFRILALTATPGSSLEGVQDVIDNLGISHVEIRTEESIDIRQYVHSRDINTITFDPSDEMMEVRDLFSKALKPLVTKLSSQNIYYGRDPMSLTTYGLMKARNDWMAGPGRHVNQGTKFSVIATFAILQSLAHSIKLLNFHGIKPFYNNLAEFRTTEEEKGGKGSKLKRQVLEDENFQKMMDMIEGWMKIDGFLGHPKLEYLCETLVNHFMDAGEGSNTRAIVFSEYRDSAEEIVRILNKQPLIKATVFVGQADSKRSEGMKQKQQIETIEKFKNGAHNVLVATSIGEEGLDIGQVDLIVCYDASASPIRMLQRMGRTGRKRAGNIVLLLMKGKEEDKFNEAKDNYATMQRMICEGSRFTFRHDLSSRIVPRDIRPEVEKKVVEIPLENSQNPELPEPKRSAARMRTKPAKKKFNMPDGVETGFIKASFFGQAGAKTAKPPARPPAPKETDFIAERPKLESILLSTSQENELRRNYTKIPLGHSKVEELDIDWYRHPTSRRVVQKTIHVKHGEYTKRCVKLFRSLAKSQAPANRYTKPYGETDTSSWELIPLPPLADETEGETSRKGQKKRPRLESGQEAEEAEQYAAPKKRQATAKTKSTGVSKQTNKPRARHTALISDCEEGGNEYDGNVDDDEQSRPRNFRSKGRGRGSGRGKKSQPKQGDPNVDYGDDCTRTSDMEMGTDGSDDGADLEDFIVSDGEVTSSLQHRPRGSTSPTTAPDAGSSSLSSKTGRKQQAPDSFASDEDDGDVFGPKFVPVTASAAKGSLPSTARREKPKPFYVPVELPATQDTTDGDDDLPDIEFLSAKRKREGTGTGMRTGSPGHVKVGDTSKGGSGGDQTREKPSGGAASHARARKRTVVMDSDDDQE.

Polar residues-rich tracts occupy residues 24–38 (NITS…QLAS) and 59–68 (PTVSQGQATA). The disordered stretch occupies residues 24 to 132 (NITSHHPSNS…PFRADMPPEQ (109 aa)). A compositionally biased stretch (low complexity) spans 71–88 (RAKTASKPTTSATTSRPS). Positions 89 to 104 (LAQSSQRKNLRQTTLW) are enriched in polar residues. The Helicase ATP-binding domain occupies 162 to 330 (IVKNGLFNNT…DVIDNLGISH (169 aa)). 175–182 (LPTGLGKT) contributes to the ATP binding site. The DEAH box signature appears at 278-281 (DEAH). Residues 506–665 (LVNHFMDAGE…GSRFTFRHDL (160 aa)) enclose the Helicase C-terminal domain. Disordered stretches follow at residues 690 to 717 (SQNP…FNMP) and 830 to 1168 (APAN…DDQE). The segment covering 701 to 714 (SAARMRTKPAKKKF) has biased composition (basic residues). A compositionally biased stretch (polar residues) spans 895–907 (TAKTKSTGVSKQT). The segment covering 920 to 936 (DCEEGGNEYDGNVDDDE) has biased composition (acidic residues). The segment covering 941-959 (RNFRSKGRGRGSGRGKKSQ) has biased composition (basic residues). Acidic residues predominate over residues 985-996 (GSDDGADLEDFI). The span at 1001–1030 (EVTSSLQHRPRGSTSPTTAPDAGSSSLSSK) shows a compositional bias: polar residues.

This sequence belongs to the DEAD box helicase family. DEAH subfamily. FANCM sub-subfamily. Interacts with the MHF histone-fold complex to form the FANCM-MHF complex.

The protein resides in the nucleus. The catalysed reaction is ATP + H2O = ADP + phosphate + H(+). ATP-dependent DNA helicase involved in DNA damage repair by homologous recombination and in genome maintenance. Capable of unwinding D-loops. Plays a role in limiting crossover recombinants during mitotic DNA double-strand break (DSB) repair. Component of a FANCM-MHF complex which promotes gene conversion at blocked replication forks, probably by reversal of the stalled fork. The chain is ATP-dependent DNA helicase mph1 from Neurospora crassa (strain ATCC 24698 / 74-OR23-1A / CBS 708.71 / DSM 1257 / FGSC 987).